A 497-amino-acid polypeptide reads, in one-letter code: 4,4'-diaponeurosporene oxygenase (497 aa).

Residue 7-19 (VIGGGLGGISAAI) coordinates FAD.

The protein belongs to the carotenoid/retinoid oxidoreductase family. CrtP subfamily. Requires FAD as cofactor.

It carries out the reaction all-trans-4,4'-diaponeurosporene + 2 AH2 + 2 O2 = 4,4'-diaponeurosporenal + 2 A + 3 H2O. It participates in carotenoid biosynthesis; staphyloxanthin biosynthesis; staphyloxanthin from farnesyl diphosphate: step 3/5. Functionally, involved in the biosynthesis of the yellow-orange carotenoid staphyloxanthin, which plays a role in the virulence via its protective function against oxidative stress. Catalyzes the oxidation of the terminal methyl side group of 4,4'-diaponeurosporene to form 4,4'-diaponeurosporen-4-al. The chain is 4,4'-diaponeurosporene oxygenase from Staphylococcus aureus (strain MW2).